A 584-amino-acid polypeptide reads, in one-letter code: MLKKKGFSTSFPNEDFIDNQDTISNFKIKKEDFLLDFDDTYEQLNMTTPKGKIIIQGQENHSPFSLKSFSNLSFDYNRPLSPKTHILNIQDNNNNNYSPILKRVNKTISPSLVSSTNRFKNSLSCSSSSPSSSSSSSSSSPRLISTPPIISTPSSPMILTSSLDKFDEILSENEFMSLDNSVTSSSSSPSSSSCSSPIVIKTNATTSTKIVTPSSSPSSSYIEDAPSTPSPSKLFQSLSFKSPCSSPSSSSSSTTTPKSSINGGNIIKKQLFSNKRIQDIKIEKPSTKIDLHPSKLQIKSNLKIKPSLPYNSTEVTANTKTTTSTTTTTNTTIPTLSKNIIKRTSSVGLSPTLSSTQLVNKSSRKSISAATTTTITPHNNNSTMTTKTPSKRSLDTSNLSTPKSTSSTINKAFTTSTTPLKKPRMSMTPLSSSSSSSTTPSKFINPLPSSSSKTTTTITNSKRLSTLSKPSPITPITPTITKTTATTTTTTTTTPNKPTNKRLSTLVNTAQKPRKSYAPPPSSHISDELEQRIQEALLAEANGNYTGGSVLTHSSPQKVEQSEWSPIRKKSTLHDVHACTKKNY.

Disordered stretches follow at residues 123 to 156 (LSCSSSSPSSSSSSSSSSPRLISTPPIISTPSSP), 209 to 264 (KIVT…INGG), and 355 to 479 (STQL…ITPT). Low complexity-rich tracts occupy residues 237–260 (SLSFKSPCSSPSSSSSSTTTPKSS) and 366–376 (SISAATTTTIT). Polar residues-rich tracts occupy residues 377-388 (PHNNNSTMTTKT) and 395-419 (DTSNLSTPKSTSSTINKAFTTSTTP). Over residues 425–479 (MSMTPLSSSSSSSTTPSKFINPLPSSSSKTTTTITNSKRLSTLSKPSPITPITPT) the composition is skewed to low complexity.

This is an uncharacterized protein from Dictyostelium discoideum (Social amoeba).